A 631-amino-acid chain; its full sequence is DNA mismatch repair protein MutL (631 aa).

Belongs to the DNA mismatch repair MutL/HexB family.

Its function is as follows. This protein is involved in the repair of mismatches in DNA. It is required for dam-dependent methyl-directed DNA mismatch repair. May act as a 'molecular matchmaker', a protein that promotes the formation of a stable complex between two or more DNA-binding proteins in an ATP-dependent manner without itself being part of a final effector complex. In Mannheimia succiniciproducens (strain KCTC 0769BP / MBEL55E), this protein is DNA mismatch repair protein MutL.